The following is a 657-amino-acid chain: L-glutamate oxidase precursor (657 aa).

The signal sequence occupies residues M1–R12. E86, A87, R95, M120, R121, M350, E639, W647, and I648 together coordinate FAD.

This sequence belongs to the flavin monoamine oxidase family. LGOX subfamily. The mature enzyme is a heterohexamer composed of 2 alpha chains, 2 beta chains and 2 gamma chains (alpha2beta2gamma2). Requires FAD as cofactor. In terms of processing, the precursor form is proteolytically cleaved by an endopeptidase into alpha, beta and gamma chains, which form the stable mature enzyme.

The protein resides in the secreted. It catalyses the reaction L-glutamate + O2 + H2O = H2O2 + 2-oxoglutarate + NH4(+). With respect to regulation, proteinase K-treated enzyme exhibits improved affinity for the substrate, increased activity and increased thermostability. Functionally, catalyzes the oxidative deamination of L-glutamate to 2-ketoglutarate along with the production of ammonia and hydrogen peroxide. Exhibits strict specificity for L-glutamate, and shows only very weak activity with L-glutamine. In Streptomyces diastatochromogenes, this protein is L-glutamate oxidase precursor.